The sequence spans 403 residues: uncharacterized protein (403 aa).

Residues 55 to 88 (LTGSPNPQATPKQENKSNFFSEKQSVRENGNSSA) show a composition bias toward polar residues. The segment at 55–95 (LTGSPNPQATPKQENKSNFFSEKQSVRENGNSSAGEKKQKW) is disordered. At Ser-58 the chain carries Phosphoserine. One can recognise a J domain in the interval 113–177 (QYYEILDLKK…NLRAHYDRTG (65 aa)). The helical transmembrane segment at 263 to 283 (SIFYQLLPLIVVILFAFLSNF) threads the bilayer.

It is found in the endoplasmic reticulum membrane. This is an uncharacterized protein from Schizosaccharomyces pombe (strain 972 / ATCC 24843) (Fission yeast).